Reading from the N-terminus, the 507-residue chain is Histidine ammonia-lyase (507 aa).

The 5-imidazolinone (Ala-Gly) cross-link spans 141–143; that stretch reads ASG. Residue S142 is modified to 2,3-didehydroalanine (Ser).

The protein belongs to the PAL/histidase family. Post-translationally, contains an active site 4-methylidene-imidazol-5-one (MIO), which is formed autocatalytically by cyclization and dehydration of residues Ala-Ser-Gly.

The protein resides in the cytoplasm. The enzyme catalyses L-histidine = trans-urocanate + NH4(+). It participates in amino-acid degradation; L-histidine degradation into L-glutamate; N-formimidoyl-L-glutamate from L-histidine: step 1/3. The protein is Histidine ammonia-lyase of Cereibacter sphaeroides (strain ATCC 17029 / ATH 2.4.9) (Rhodobacter sphaeroides).